The sequence spans 185 residues: GTP-dependent dephospho-CoA kinase (185 aa).

GTP contacts are provided by Asp50, Val52, Asp73, Lys75, and Glu128.

It belongs to the GTP-dependent DPCK family.

It carries out the reaction 3'-dephospho-CoA + GTP = GDP + CoA + H(+). It participates in cofactor biosynthesis; coenzyme A biosynthesis. Functionally, catalyzes the GTP-dependent phosphorylation of the 3'-hydroxyl group of dephosphocoenzyme A to form coenzyme A (CoA). The chain is GTP-dependent dephospho-CoA kinase from Aeropyrum pernix (strain ATCC 700893 / DSM 11879 / JCM 9820 / NBRC 100138 / K1).